The following is a 186-amino-acid chain: MGLKADNWIKKMALEHNMIEPFCEANIGKGIVSYGLSSYGYDIRVGREFKIFTNVNSTVVDPKNFVEENVVDFVGDVCIVPANSFALARTVEYFKMPNDVLAICLGKSTYARCGIIVNVTPFEPGFEGHITIEISNTTPLPAKIYANEGIAQVLFLQGDEPCDVTYADKKGKYQAQTGITLPRILK.

Lys107–Arg112 is a dCTP binding site. The Proton donor/acceptor role is filled by Glu133. Residues Gln152, Tyr166, and Gln176 each contribute to the dCTP site.

The protein belongs to the dCTP deaminase family. In terms of assembly, homotrimer.

It catalyses the reaction dCTP + H2O + H(+) = dUTP + NH4(+). The protein operates within pyrimidine metabolism; dUMP biosynthesis; dUMP from dCTP (dUTP route): step 1/2. In terms of biological role, catalyzes the deamination of dCTP to dUTP. This is dCTP deaminase from Campylobacter lari (strain RM2100 / D67 / ATCC BAA-1060).